Consider the following 355-residue polypeptide: Ribosomal RNA small subunit methyltransferase H (355 aa).

S-adenosyl-L-methionine is bound by residues 47–49 (GGY), Asp65, Phe92, Asp113, and Gln120. A disordered region spans residues 332-355 (LLPLATLPETSHPKSASHSKSRRR). Over residues 346-355 (SASHSKSRRR) the composition is skewed to basic residues.

The protein belongs to the methyltransferase superfamily. RsmH family.

The protein localises to the cytoplasm. The enzyme catalyses cytidine(1402) in 16S rRNA + S-adenosyl-L-methionine = N(4)-methylcytidine(1402) in 16S rRNA + S-adenosyl-L-homocysteine + H(+). Its function is as follows. Specifically methylates the N4 position of cytidine in position 1402 (C1402) of 16S rRNA. This Beijerinckia indica subsp. indica (strain ATCC 9039 / DSM 1715 / NCIMB 8712) protein is Ribosomal RNA small subunit methyltransferase H.